We begin with the raw amino-acid sequence, 149 residues long: Large ribosomal subunit protein bL9 (149 aa).

This sequence belongs to the bacterial ribosomal protein bL9 family.

In terms of biological role, binds to the 23S rRNA. The polypeptide is Large ribosomal subunit protein bL9 (Geobacillus kaustophilus (strain HTA426)).